The primary structure comprises 213 residues: High frequency lysogenization protein HflD (213 aa).

A coiled-coil region spans residues 79 to 126; sequence QGLNAELTRYTLSLMVLERKLSSAKGALDTLGNRINGLQRQLEHFDLQ.

The protein belongs to the HflD family. As to quaternary structure, interacts with CII protein from phage lambda.

The protein resides in the cytoplasm. The protein localises to the cell inner membrane. Its function is as follows. Negative regulator of phage lambda lysogenization. Contributes to the degradation of the phage regulatory protein CII. Acts probably by holding CII on the membrane surface, away from the target promoters, but close to the FtsH protease. The chain is High frequency lysogenization protein HflD from Escherichia coli O127:H6 (strain E2348/69 / EPEC).